The primary structure comprises 447 residues: Chromosomal replication initiator protein DnaA (447 aa).

Positions 1–74 are domain I, interacts with DnaA modulators; sequence MPDVESFWHS…TGFKLTGAEV (74 aa). The interval 74–109 is domain II; the sequence is VMPHFVVADEKDAALAQELEEPAEEEVVFSEQSKKA. The segment at 110–326 is domain III, AAA+ region; sequence MLNPKYTFDT…GALVRVQAFA (217 aa). ATP-binding residues include glycine 154, glycine 156, lysine 157, and threonine 158. Residues 327-447 are domain IV, binds dsDNA; the sequence is TINGEDITTS…VSEIKNLLNS (121 aa).

This sequence belongs to the DnaA family. As to quaternary structure, oligomerizes as a right-handed, spiral filament on DNA at oriC.

The protein localises to the cytoplasm. Its function is as follows. Plays an essential role in the initiation and regulation of chromosomal replication. ATP-DnaA binds to the origin of replication (oriC) to initiate formation of the DNA replication initiation complex once per cell cycle. Binds the DnaA box (a 9 base pair repeat at the origin) and separates the double-stranded (ds)DNA. Forms a right-handed helical filament on oriC DNA; dsDNA binds to the exterior of the filament while single-stranded (ss)DNA is stabiized in the filament's interior. The ATP-DnaA-oriC complex binds and stabilizes one strand of the AT-rich DNA unwinding element (DUE), permitting loading of DNA polymerase. After initiation quickly degrades to an ADP-DnaA complex that is not apt for DNA replication. Binds acidic phospholipids. Strand separation requires the DnaA boxes and adjacent DnaA-trio motifs as well as ATP. The polypeptide is Chromosomal replication initiator protein DnaA (Enterococcus faecalis (strain ATCC 700802 / V583)).